The chain runs to 315 residues: Olfactory receptor 5M10 (315 aa).

Residues 1–25 lie on the Extracellular side of the membrane; the sequence is MLSPNHTIVTEFILLGLTDDPVLEK. A glycan (N-linked (GlcNAc...) asparagine) is linked at N5. Residues 26-46 traverse the membrane as a helical segment; the sequence is ILFGVFLAIYLITLAGNLCMI. At 47–54 the chain is on the cytoplasmic side; it reads LLIRTNSQ. A helical membrane pass occupies residues 55 to 75; the sequence is LQTPMYFFLGHLSFVDICYSS. Topologically, residues 76-99 are extracellular; that stretch reads NVTPNMLHNFLSEQKTISYAGCFT. Cysteines 97 and 189 form a disulfide. Residues 100-120 traverse the membrane as a helical segment; the sequence is QCLLFIALVITEFYFLASMAL. Topologically, residues 121–139 are cytoplasmic; sequence DRYVAICSPLHYSSRMSKN. The helical transmembrane segment at 140 to 160 threads the bilayer; sequence ICISLVTVPYMYGFLNGLSQT. Over 161–196 the chain is Extracellular; sequence LLTFHLSFCGSLEINHFYCADPPLIMLACSDTRVKK. A helical membrane pass occupies residues 197-217; sequence MAMFVVAGFTLSSSLFIILLS. Over 218-237 the chain is Cytoplasmic; the sequence is YLFIFAAIFRIRSAEGRHKA. Residues 238–258 traverse the membrane as a helical segment; sequence FSTCASHLTIVTLFYGTLFCM. Residues 259–271 are Extracellular-facing; it reads YVRPPSEKSVEES. A helical membrane pass occupies residues 272–292; sequence KIIAVFYTFLSPMLNPLIYSL. Residues 293 to 315 lie on the Cytoplasmic side of the membrane; that stretch reads RNRDVILAIQQMIRGKSFCKIAV.

It belongs to the G-protein coupled receptor 1 family.

It is found in the cell membrane. Functionally, odorant receptor. The chain is Olfactory receptor 5M10 (OR5M10) from Homo sapiens (Human).